The chain runs to 142 residues: AP-2 complex subunit sigma (142 aa).

Belongs to the adaptor complexes small subunit family. As to quaternary structure, adaptor protein complex 2 (AP-2) is a heterotetramer composed of two large adaptins (alpha-type and beta-type subunits), a medium adaptin (mu-type subunit) and a small adaptin (sigma-type subunit).

Its subcellular location is the cell membrane. The protein localises to the membrane. The protein resides in the coated pit. Its function is as follows. Subunit of the adaptor protein complex 2 (AP-2). Adaptor protein complexes function in protein transport via transport vesicles in different membrane traffic pathways. Adaptor protein complexes are vesicle coat components and appear to be involved in cargo selection and vesicle formation. AP-2 is involved in clathrin-dependent endocytosis in which cargo proteins are incorporated into vesicles surrounded by clathrin (clathrin-coated vesicles, CCVs) which are destined for fusion with the early endosome. The complex binds polyphosphoinositides. The protein is AP-2 complex subunit sigma (AP17) of Arabidopsis thaliana (Mouse-ear cress).